The chain runs to 177 residues: O-acetyl-ADP-ribose deacetylase (177 aa).

Residues 1–175 (MKTRIHVVQG…LYERLLTQQG (175 aa)) enclose the Macro domain. Residues 11–12 (DI), Asn25, 33–35 (GVD), and 122–126 (STGVY) contribute to the substrate site. Asp35 serves as the catalytic Proton acceptor.

Belongs to the MacroD-type family. YmdB subfamily. As to quaternary structure, homodimer. Interacts with RNase III.

The catalysed reaction is 3''-O-acetyl-ADP-D-ribose + H2O = ADP-D-ribose + acetate + H(+). The enzyme catalyses 2''-O-acetyl-ADP-D-ribose + H2O = ADP-D-ribose + acetate + H(+). Functionally, deacetylates O-acetyl-ADP ribose to yield ADP-ribose and free acetate. Down-regulates ribonuclease 3 (RNase III) activity. Acts by interacting directly with the region of the ribonuclease that is required for dimerization/activation. This is O-acetyl-ADP-ribose deacetylase from Escherichia coli O157:H7.